The following is a 431-amino-acid chain: Enolase (431 aa).

Glutamine 167 is a (2R)-2-phosphoglycerate binding site. The active-site Proton donor is the glutamate 209. Positions 246, 289, and 316 each coordinate Mg(2+). The (2R)-2-phosphoglycerate site is built by lysine 341, arginine 370, serine 371, and lysine 392. The active-site Proton acceptor is the lysine 341.

It belongs to the enolase family. In terms of assembly, component of the RNA degradosome, a multiprotein complex involved in RNA processing and mRNA degradation. Mg(2+) serves as cofactor.

It is found in the cytoplasm. The protein localises to the secreted. Its subcellular location is the cell surface. The enzyme catalyses (2R)-2-phosphoglycerate = phosphoenolpyruvate + H2O. The protein operates within carbohydrate degradation; glycolysis; pyruvate from D-glyceraldehyde 3-phosphate: step 4/5. Catalyzes the reversible conversion of 2-phosphoglycerate (2-PG) into phosphoenolpyruvate (PEP). It is essential for the degradation of carbohydrates via glycolysis. This is Enolase from Shewanella baltica (strain OS223).